We begin with the raw amino-acid sequence, 248 residues long: Fasciclin-like arabinogalactan protein 19 (248 aa).

A signal peptide spans 1–29; that stretch reads MAKISSASCFRAIFLGALIILCLPHPSTG. The FAS1 domain maps to 35–166; it reads LERAIAILRV…IAVHGLADLL (132 aa). 2 N-linked (GlcNAc...) asparagine glycosylation sites follow: Asn-114 and Asn-136. A compositionally biased stretch (low complexity) spans 213–226; it reads SPSVEEVSPSPSWG. Positions 213–248 are disordered; it reads SPSVEEVSPSPSWGEGEEDFIVGDEGGPLDGRNNGF.

Belongs to the fasciclin-like AGP family.

The protein resides in the secreted. Functionally, may be a cell surface adhesion protein. The protein is Fasciclin-like arabinogalactan protein 19 (FLA19) of Arabidopsis thaliana (Mouse-ear cress).